The primary structure comprises 293 residues: 4-hydroxy-tetrahydrodipicolinate synthase (293 aa).

Thr-45 contacts pyruvate. Tyr-133 serves as the catalytic Proton donor/acceptor. Lys-161 functions as the Schiff-base intermediate with substrate in the catalytic mechanism. Residue Ile-204 coordinates pyruvate.

The protein belongs to the DapA family. In terms of assembly, homotetramer; dimer of dimers.

It localises to the cytoplasm. It catalyses the reaction L-aspartate 4-semialdehyde + pyruvate = (2S,4S)-4-hydroxy-2,3,4,5-tetrahydrodipicolinate + H2O + H(+). Its pathway is amino-acid biosynthesis; L-lysine biosynthesis via DAP pathway; (S)-tetrahydrodipicolinate from L-aspartate: step 3/4. Its function is as follows. Catalyzes the condensation of (S)-aspartate-beta-semialdehyde [(S)-ASA] and pyruvate to 4-hydroxy-tetrahydrodipicolinate (HTPA). This Yersinia pseudotuberculosis serotype O:1b (strain IP 31758) protein is 4-hydroxy-tetrahydrodipicolinate synthase.